A 121-amino-acid polypeptide reads, in one-letter code: Phosphoribosyl-ATP pyrophosphatase (121 aa).

The protein belongs to the PRA-PH family.

The protein resides in the cytoplasm. The enzyme catalyses 1-(5-phospho-beta-D-ribosyl)-ATP + H2O = 1-(5-phospho-beta-D-ribosyl)-5'-AMP + diphosphate + H(+). Its pathway is amino-acid biosynthesis; L-histidine biosynthesis; L-histidine from 5-phospho-alpha-D-ribose 1-diphosphate: step 2/9. This is Phosphoribosyl-ATP pyrophosphatase from Burkholderia ambifaria (strain MC40-6).